We begin with the raw amino-acid sequence, 211 residues long: MNSNVENLPPHIIRRVYKEVSTLTSDPPEGIKIIPNEEDITDVQVNIEGPEGTPYAGGMFRMKLILGKDFPAAPPKGYFLTKIFHPNVSNNGEICVNVLKKDWKAELGIRHVLLTIKCLLIHPNPESALNEEAGRLLLENYEEYASRARLMTDIHAQGTSLRGKDPTDPCSSASTPVVSGDGPMAKKHAGDRDKKLAAKKKTDKKRALRRL.

In terms of domain architecture, UBC core spans 11 to 157 (HIIRRVYKEV…ARLMTDIHAQ (147 aa)). Cys95 functions as the Glycyl thioester intermediate in the catalytic mechanism. Positions 158-211 (GTSLRGKDPTDPCSSASTPVVSGDGPMAKKHAGDRDKKLAAKKKTDKKRALRRL) are disordered. A compositionally biased stretch (basic residues) spans 197 to 211 (AAKKKTDKKRALRRL).

Belongs to the ubiquitin-conjugating enzyme family.

It catalyses the reaction S-ubiquitinyl-[E1 ubiquitin-activating enzyme]-L-cysteine + [E2 ubiquitin-conjugating enzyme]-L-cysteine = [E1 ubiquitin-activating enzyme]-L-cysteine + S-ubiquitinyl-[E2 ubiquitin-conjugating enzyme]-L-cysteine.. It participates in protein modification; protein ubiquitination. Functionally, catalyzes the covalent attachment of ubiquitin to other proteins. Acts as an essential factor of the anaphase promoting complex/cyclosome (APC/C), a cell cycle-regulated ubiquitin ligase that controls progression through mitosis. Acts by specifically elongating 'Lys-11'-linked polyubiquitin chains initiated by the E2 enzyme ube2c/ubch10 on APC/C substrates, enhancing the degradation of APC/C substrates by the proteasome and promoting mitotic exit. In Xenopus laevis (African clawed frog), this protein is Ubiquitin-conjugating enzyme E2 S-B (ube2s-b).